The sequence spans 400 residues: Bifunctional enzyme IspD/IspF (400 aa).

Positions 1-244 (MSHRVLGTER…LLKERDKMDI (244 aa)) are 2-C-methyl-D-erythritol 4-phosphate cytidylyltransferase. A 2-C-methyl-D-erythritol 2,4-cyclodiphosphate synthase region spans residues 245–400 (RTGNGYDVHR…ALATVTLVRT (156 aa)). A divalent metal cation is bound by residues aspartate 251 and histidine 253. 4-CDP-2-C-methyl-D-erythritol 2-phosphate contacts are provided by residues 251–253 (DVH) and 277–278 (HS). A divalent metal cation is bound at residue histidine 285. 4-CDP-2-C-methyl-D-erythritol 2-phosphate contacts are provided by residues 299–301 (DIG), 375–378 (TTSE), phenylalanine 382, and arginine 385.

The protein in the N-terminal section; belongs to the IspD/TarI cytidylyltransferase family. IspD subfamily. This sequence in the C-terminal section; belongs to the IspF family. Requires a divalent metal cation as cofactor.

The catalysed reaction is 2-C-methyl-D-erythritol 4-phosphate + CTP + H(+) = 4-CDP-2-C-methyl-D-erythritol + diphosphate. It catalyses the reaction 4-CDP-2-C-methyl-D-erythritol 2-phosphate = 2-C-methyl-D-erythritol 2,4-cyclic diphosphate + CMP. It participates in isoprenoid biosynthesis; isopentenyl diphosphate biosynthesis via DXP pathway; isopentenyl diphosphate from 1-deoxy-D-xylulose 5-phosphate: step 2/6. The protein operates within isoprenoid biosynthesis; isopentenyl diphosphate biosynthesis via DXP pathway; isopentenyl diphosphate from 1-deoxy-D-xylulose 5-phosphate: step 4/6. Functionally, bifunctional enzyme that catalyzes the formation of 4-diphosphocytidyl-2-C-methyl-D-erythritol from CTP and 2-C-methyl-D-erythritol 4-phosphate (MEP) (IspD), and catalyzes the conversion of 4-diphosphocytidyl-2-C-methyl-D-erythritol 2-phosphate (CDP-ME2P) to 2-C-methyl-D-erythritol 2,4-cyclodiphosphate (ME-CPP) with a corresponding release of cytidine 5-monophosphate (CMP) (IspF). The protein is Bifunctional enzyme IspD/IspF of Dinoroseobacter shibae (strain DSM 16493 / NCIMB 14021 / DFL 12).